Here is a 1142-residue protein sequence, read N- to C-terminus: ABC transporter F family member 4 (1142 aa).

Positions 1–564 (MGPKGKKKGQ…EDAFELAKKK (564 aa)) are disordered. Composition is skewed to low complexity over residues 121–143 (PQPV…QQQQ), 153–166 (PQPV…APQK), and 182–195 (PQPV…APQK). 2 stretches are compositionally biased toward acidic residues: residues 203–212 (SEDEDEEDEV) and 233–244 (EEEEEEEEEEIE). 2 stretches are compositionally biased toward basic residues: residues 249–261 (KGGK…KGGK) and 280–290 (KGGKKDKKKGS). Residues 295–306 (EEEEEEEEEEIE) show a composition bias toward acidic residues. The segment covering 314-328 (NKKDQKKGGKGKHVE) has biased composition (basic and acidic residues). Residues 329–340 (EEEEEEEEEEIE) show a composition bias toward acidic residues. Residues 377–387 (KGGKKDKKKGS) show a composition bias toward basic residues. Composition is skewed to acidic residues over residues 392–404 (EEEE…EEIE) and 441–451 (EEEEQEQEEEE). The span at 456-467 (SKSNKKDKKKGK) shows a compositional bias: basic residues. Acidic residues predominate over residues 471-480 (EEEEEEEEEE). The segment covering 485-496 (SKSNKKDKKKGS) has biased composition (basic residues). The span at 501–518 (EEEEEEEEEEEEEKEEEE) shows a compositional bias: acidic residues. The segment covering 530–548 (AKKVKKVDKKEKKKEKEKK) has biased composition (basic residues). 2 consecutive ABC transporter domains span residues 604–857 (IKFD…RSKE) and 923–1139 (LVFK…DNMV). ATP contacts are provided by residues 636 to 643 (GRNGIGKS) and 956 to 963 (GMNGVGKS).

This sequence belongs to the ABC transporter superfamily.

In Dictyostelium discoideum (Social amoeba), this protein is ABC transporter F family member 4 (abcF4).